The chain runs to 526 residues: Amino acid transporter AVT1E (526 aa).

The tract at residues 1-49 (MKQNETFDQEREDLYHTFDEEDEESQTESSVPSTPLSRNRSEDVPVPWP) is disordered. Over residues 8–18 (DQEREDLYHTF) the composition is skewed to basic and acidic residues. The next 11 membrane-spanning stretches (helical) occupy residues 140-160 (SVLN…PYAV), 165-185 (WLGL…GILL), 212-232 (ILVS…YIIM), 253-273 (LDST…TVWL), 278-298 (LLSY…LCLF), 320-340 (IPVA…FPNI), 353-373 (VLLI…VCGF), 397-417 (IAVW…ITPV), 436-456 (GVSM…ALTV), 458-478 (FFAT…ALIF), and 494-514 (FQIG…CCGT).

This sequence belongs to the amino acid/polyamine transporter 2 family. Amino acid/auxin permease (AAAP) (TC 2.A.18.5) subfamily.

Its subcellular location is the membrane. This is Amino acid transporter AVT1E from Arabidopsis thaliana (Mouse-ear cress).